Here is a 205-residue protein sequence, read N- to C-terminus: Probable peptidyl-tRNA hydrolase 2 (205 aa).

The segment covering 40-49 (YSSKNANKAS) has biased composition (polar residues). The tract at residues 40–68 (YSSKNANKASNPEKESPVSVSNDEDSESE) is disordered. Residues serine 65 and serine 79 each carry the phosphoserine modification.

This sequence belongs to the PTH2 family.

The enzyme catalyses an N-acyl-L-alpha-aminoacyl-tRNA + H2O = an N-acyl-L-amino acid + a tRNA + H(+). Its function is as follows. The natural substrate for this enzyme may be peptidyl-tRNAs which drop off the ribosome during protein synthesis. This is Probable peptidyl-tRNA hydrolase 2 from Schizosaccharomyces pombe (strain 972 / ATCC 24843) (Fission yeast).